Consider the following 512-residue polypeptide: NAD(P)H-quinone oxidoreductase chain 4, chloroplastic (512 aa).

The next 14 helical transmembrane spans lie at leucine 4–isoleucine 24, tryptophan 34–histidine 54, methionine 87–valine 107, alanine 111–serine 131, leucine 134–valine 154, phenylalanine 167–phenylalanine 187, isoleucine 210–histidine 230, histidine 241–isoleucine 261, leucine 273–threonine 293, methionine 312–leucine 332, glutamine 333–aspartate 353, threonine 373–alanine 395, isoleucine 416–leucine 436, and isoleucine 462–alanine 482.

This sequence belongs to the complex I subunit 4 family.

The protein localises to the plastid. The protein resides in the chloroplast thylakoid membrane. It carries out the reaction a plastoquinone + NADH + (n+1) H(+)(in) = a plastoquinol + NAD(+) + n H(+)(out). It catalyses the reaction a plastoquinone + NADPH + (n+1) H(+)(in) = a plastoquinol + NADP(+) + n H(+)(out). The polypeptide is NAD(P)H-quinone oxidoreductase chain 4, chloroplastic (Chlorokybus atmophyticus (Soil alga)).